The following is a 40-amino-acid chain: Protein 4.1 (40 aa).

This Escherichia phage T7 (Bacteriophage T7) protein is Protein 4.1.